The sequence spans 354 residues: MKVDPNKEKALAAVLSQIEKQFGKGSIMKLGEDRTMDVETISTGSLSLDIALGAGGLPMGRIVEIYGPESSGKTTLTLEVIAAAQREGKTCAFIDAEHALDPIYAKKLGVDIDNLLCSQPDTGEQALEICDALTRSGAVDVIVVDSVAALTPKAEIEGEIGDSHMGLAARMMSQAMRKLAGNLKQSNTLLIFINQIRMKIGVMFGSPETTTGGNALKFYASVRLDIRRTGAIKDGDEVVGNETRVKVVKNKIAAPFKQAEFQILYGQGINRTGELVDLGVAHKLVDKAGAWYSYKGEKIGQGRANAGKFLTENPVIASEINTTLRAMLLNGGANSSDSKTESDENIDLETGEVF.

ATP is bound at residue 67–74 (GPESSGKT). The disordered stretch occupies residues 331–354 (GGANSSDSKTESDENIDLETGEVF). Acidic residues predominate over residues 343 to 354 (DENIDLETGEVF).

This sequence belongs to the RecA family.

The protein localises to the cytoplasm. In terms of biological role, can catalyze the hydrolysis of ATP in the presence of single-stranded DNA, the ATP-dependent uptake of single-stranded DNA by duplex DNA, and the ATP-dependent hybridization of homologous single-stranded DNAs. It interacts with LexA causing its activation and leading to its autocatalytic cleavage. This chain is Protein RecA, found in Shewanella frigidimarina (strain NCIMB 400).